We begin with the raw amino-acid sequence, 452 residues long: Major royal jelly protein 2 (452 aa).

The first 17 residues, 1–17 (MTRWLFMVACLGIACQG), serve as a signal peptide directing secretion. N-linked (GlcNAc...) asparagine glycans are attached at residues N145 and N178. The disordered stretch occupies residues 416 to 452 (NNNQNDNIQNTNNQNDNNQKNNKKNANNQKNNNQNDN).

In terms of processing, N-linked core structure contains mannose (which consists of 8-alpha-mannosyl residues, one beta-mannosyl residue, and chitobiose). As to expression, secreted from the hypopharyngeal glands of the worker honey bee (at protein level); expression peaks at 12 days post eclosion. Expressed in the brains of adult worker bees peaking at 12 days post eclosion (at protein level). Expressed in the spermatheca of adult queen bees (at protein level); Expression levels are higher in mated queens than in virgin queens.

The protein resides in the secreted. Highly abundant protein component of royal jelly, a substance produced in the hypopharyngeal gland containing proteins, free amino acids, fatty acids, sugars and other nutrients, which is fed to developing larvae by worker nurse bees. Major royal jelly proteins (MRJPs) are high in essential amino acids and probably have a nutritional function in larval food. All larvae are fed some royal jelly (also known as worker jelly) early in their development but it forms the principal source of nutrition for larvae destined to become queen bees. Produced in the spermatheca of adult queen bees, along with other major royal jelly proteins, where it may act as a nutrient supply for sperm stored by mated queens, or be involved in energy metabolism. This Apis mellifera (Honeybee) protein is Major royal jelly protein 2.